We begin with the raw amino-acid sequence, 250 residues long: tRNA (guanine-N(7)-)-methyltransferase (250 aa).

The S-adenosyl-L-methionine site is built by Glu79, Glu104, Asp131, and Asp154. Residue Asp154 is part of the active site. Substrate contacts are provided by residues Lys158, Asp190, and 228-231 (TKFE).

Belongs to the class I-like SAM-binding methyltransferase superfamily. TrmB family.

It catalyses the reaction guanosine(46) in tRNA + S-adenosyl-L-methionine = N(7)-methylguanosine(46) in tRNA + S-adenosyl-L-homocysteine. Its pathway is tRNA modification; N(7)-methylguanine-tRNA biosynthesis. In terms of biological role, catalyzes the formation of N(7)-methylguanine at position 46 (m7G46) in tRNA. The sequence is that of tRNA (guanine-N(7)-)-methyltransferase from Actinobacillus pleuropneumoniae serotype 5b (strain L20).